The chain runs to 650 residues: ATP-dependent zinc metalloprotease FtsH (650 aa).

The Cytoplasmic segment spans residues 1-10; that stretch reads MKTKKSKSTL. Residues 11–31 form a helical membrane-spanning segment; it reads WFWLIILLAIIVTIIIIAVTV. Residues 32–123 are Extracellular-facing; that stretch reads KGTTQVISDA…LVYQGSVGMA (92 aa). A helical transmembrane segment spans residues 124–144; it reads LLVSLAPLLIYVLLFGGIIWF. Residues 145–650 are Cytoplasmic-facing; the sequence is MMKSSSGAGA…DIKVEDLDID (506 aa). 217–224 contributes to the ATP binding site; sequence GPPGTGKT. His437 lines the Zn(2+) pocket. Residue Glu438 is part of the active site. 2 residues coordinate Zn(2+): His441 and Asp515.

In the central section; belongs to the AAA ATPase family. This sequence in the C-terminal section; belongs to the peptidase M41 family. In terms of assembly, homohexamer. It depends on Zn(2+) as a cofactor.

It localises to the cell membrane. Functionally, acts as a processive, ATP-dependent zinc metallopeptidase for both cytoplasmic and membrane proteins. Plays a role in the quality control of integral membrane proteins. The chain is ATP-dependent zinc metalloprotease FtsH from Mesoplasma florum (strain ATCC 33453 / NBRC 100688 / NCTC 11704 / L1) (Acholeplasma florum).